The primary structure comprises 267 residues: Very long chain fatty acid elongase 6 (267 aa).

N-linked (GlcNAc...) asparagine glycosylation occurs at Asn2. The next 7 helical transmembrane spans lie at Phe34–Met51, Leu70–Met90, Phe111–Ile131, Lys136–Tyr156, Met159–Ser179, Phe197–Phe217, and Ile234–Glu254.

Belongs to the ELO family. ELOVL6 subfamily. N-Glycosylated. Expressed in liver and barely in brain.

It localises to the endoplasmic reticulum membrane. The enzyme catalyses a very-long-chain acyl-CoA + malonyl-CoA + H(+) = a very-long-chain 3-oxoacyl-CoA + CO2 + CoA. It catalyses the reaction hexadecanoyl-CoA + malonyl-CoA + H(+) = 3-oxooctadecanoyl-CoA + CO2 + CoA. The catalysed reaction is (9Z)-hexadecenoyl-CoA + malonyl-CoA + H(+) = 3-oxo-(11Z)-octadecenoyl-CoA + CO2 + CoA. It carries out the reaction dodecanoyl-CoA + malonyl-CoA + H(+) = 3-oxotetradecanoyl-CoA + CO2 + CoA. The enzyme catalyses tetradecanoyl-CoA + malonyl-CoA + H(+) = 3-oxohexadecanoyl-CoA + CO2 + CoA. It catalyses the reaction (9Z)-octadecenoyl-CoA + malonyl-CoA + H(+) = 3-oxo-(11Z)-eicosenoyl-CoA + CO2 + CoA. The catalysed reaction is (9Z,12Z)-octadecadienoyl-CoA + malonyl-CoA + H(+) = (11Z,14Z)-3-oxoicosa-11,14-dienoyl-CoA + CO2 + CoA. It carries out the reaction (9Z,12Z,15Z)-octadecatrienoyl-CoA + malonyl-CoA + H(+) = (11Z,14Z,17Z)-3-oxoeicosatrienoyl-CoA + CO2 + CoA. It participates in lipid metabolism; fatty acid biosynthesis. Its activity is regulated as follows. The reaction is stimulated by the presence of HSD17B12, the enzyme catalyzing the second step of the elongation cycle. Catalyzes the first and rate-limiting reaction of the four reactions that constitute the long-chain fatty acids elongation cycle. This endoplasmic reticulum-bound enzymatic process allows the addition of 2 carbons to the chain of long- and very long-chain fatty acids (VLCFAs) per cycle. Condensing enzyme that elongates fatty acids with 12, 14 and 16 carbons with higher activity toward C16:0 acyl-CoAs. Catalyzes the synthesis of unsaturated C16 long chain fatty acids and, to a lesser extent, C18:0 and those with low desaturation degree. May participate in the production of saturated and monounsaturated VLCFAs of different chain lengths that are involved in multiple biological processes as precursors of membrane lipids and lipid mediators. This chain is Very long chain fatty acid elongase 6, found in Rattus norvegicus (Rat).